A 283-amino-acid chain; its full sequence is Phosphatidylserine decarboxylase proenzyme (283 aa).

Active-site charge relay system; for autoendoproteolytic cleavage activity residues include Asp88, His145, and Ser248. Residue Ser248 is the Schiff-base intermediate with substrate; via pyruvic acid; for decarboxylase activity of the active site. A Pyruvic acid (Ser); by autocatalysis modification is found at Ser248.

Belongs to the phosphatidylserine decarboxylase family. PSD-B subfamily. Prokaryotic type I sub-subfamily. As to quaternary structure, heterodimer of a large membrane-associated beta subunit and a small pyruvoyl-containing alpha subunit. The cofactor is pyruvate. In terms of processing, is synthesized initially as an inactive proenzyme. Formation of the active enzyme involves a self-maturation process in which the active site pyruvoyl group is generated from an internal serine residue via an autocatalytic post-translational modification. Two non-identical subunits are generated from the proenzyme in this reaction, and the pyruvate is formed at the N-terminus of the alpha chain, which is derived from the carboxyl end of the proenzyme. The autoendoproteolytic cleavage occurs by a canonical serine protease mechanism, in which the side chain hydroxyl group of the serine supplies its oxygen atom to form the C-terminus of the beta chain, while the remainder of the serine residue undergoes an oxidative deamination to produce ammonia and the pyruvoyl prosthetic group on the alpha chain. During this reaction, the Ser that is part of the protease active site of the proenzyme becomes the pyruvoyl prosthetic group, which constitutes an essential element of the active site of the mature decarboxylase.

It is found in the cell membrane. It catalyses the reaction a 1,2-diacyl-sn-glycero-3-phospho-L-serine + H(+) = a 1,2-diacyl-sn-glycero-3-phosphoethanolamine + CO2. It functions in the pathway phospholipid metabolism; phosphatidylethanolamine biosynthesis; phosphatidylethanolamine from CDP-diacylglycerol: step 2/2. Catalyzes the formation of phosphatidylethanolamine (PtdEtn) from phosphatidylserine (PtdSer). This chain is Phosphatidylserine decarboxylase proenzyme, found in Acidovorax ebreus (strain TPSY) (Diaphorobacter sp. (strain TPSY)).